A 421-amino-acid polypeptide reads, in one-letter code: UDP-N-acetylglucosamine 1-carboxyvinyltransferase 1 (421 aa).

Phosphoenolpyruvate is bound at residue K22–N23. A UDP-N-acetyl-alpha-D-glucosamine-binding site is contributed by R94. C118 acts as the Proton donor in catalysis. The residue at position 118 (C118) is a 2-(S-cysteinyl)pyruvic acid O-phosphothioketal. UDP-N-acetyl-alpha-D-glucosamine is bound by residues R123–L127, D310, and V332.

Belongs to the EPSP synthase family. MurA subfamily.

The protein resides in the cytoplasm. It carries out the reaction phosphoenolpyruvate + UDP-N-acetyl-alpha-D-glucosamine = UDP-N-acetyl-3-O-(1-carboxyvinyl)-alpha-D-glucosamine + phosphate. Its pathway is cell wall biogenesis; peptidoglycan biosynthesis. In terms of biological role, cell wall formation. Adds enolpyruvyl to UDP-N-acetylglucosamine. This chain is UDP-N-acetylglucosamine 1-carboxyvinyltransferase 1, found in Clostridium perfringens (strain 13 / Type A).